A 341-amino-acid polypeptide reads, in one-letter code: Ketol-acid reductoisomerase (NADP(+)) (341 aa).

The 181-residue stretch at 2 to 182 (TDIVYDKDAD…GGLRAGGIRT (181 aa)) folds into the KARI N-terminal Rossmann domain. Residues 25–28 (YGSQ), lysine 48, serine 51, serine 53, and 83–86 (DQHQ) each bind NADP(+). Residue histidine 108 is part of the active site. Position 134 (glycine 134) interacts with NADP(+). The KARI C-terminal knotted domain maps to 183–328 (TFTEETETDL…RELRKLFAWN (146 aa)). Residues aspartate 191, glutamate 195, glutamate 227, and glutamate 231 each contribute to the Mg(2+) site. Serine 252 provides a ligand contact to substrate.

Belongs to the ketol-acid reductoisomerase family. It depends on Mg(2+) as a cofactor.

The enzyme catalyses (2R)-2,3-dihydroxy-3-methylbutanoate + NADP(+) = (2S)-2-acetolactate + NADPH + H(+). It carries out the reaction (2R,3R)-2,3-dihydroxy-3-methylpentanoate + NADP(+) = (S)-2-ethyl-2-hydroxy-3-oxobutanoate + NADPH + H(+). Its pathway is amino-acid biosynthesis; L-isoleucine biosynthesis; L-isoleucine from 2-oxobutanoate: step 2/4. The protein operates within amino-acid biosynthesis; L-valine biosynthesis; L-valine from pyruvate: step 2/4. Functionally, involved in the biosynthesis of branched-chain amino acids (BCAA). Catalyzes an alkyl-migration followed by a ketol-acid reduction of (S)-2-acetolactate (S2AL) to yield (R)-2,3-dihydroxy-isovalerate. In the isomerase reaction, S2AL is rearranged via a Mg-dependent methyl migration to produce 3-hydroxy-3-methyl-2-ketobutyrate (HMKB). In the reductase reaction, this 2-ketoacid undergoes a metal-dependent reduction by NADPH to yield (R)-2,3-dihydroxy-isovalerate. In Clavibacter michiganensis subsp. michiganensis (strain NCPPB 382), this protein is Ketol-acid reductoisomerase (NADP(+)).